The chain runs to 236 residues: uncharacterized protein (236 aa).

Residues methionine 1–serine 29 form the signal peptide.

This is an uncharacterized protein from Archaeoglobus fulgidus (strain ATCC 49558 / DSM 4304 / JCM 9628 / NBRC 100126 / VC-16).